The chain runs to 372 residues: Silphinene synthase peniA (372 aa).

Positions 116, 121, 263, 267, and 271 each coordinate Mg(2+). The short motif at aspartate 116–glutamate 121 is the DDXXE motif element.

This sequence belongs to the terpene synthase family. Mg(2+) is required as a cofactor.

The catalysed reaction is (2E,6E)-farnesyl diphosphate = silphinene + diphosphate. The protein operates within secondary metabolite biosynthesis; terpenoid biosynthesis. Functionally, sesquiterpene cyclase; part of the gene cluster that mediates the biosynthesis of penifulvin A, a potent insecticidal sesquiterpene that features a [5.5.5.6]dioxafenestrane ring. Within the pathway, peniA catalyzes the first step and generates the angular triquinane scaffold silphinene via cyclization of the linear farnesyl pyrophosphate (FPP). The cytochrome P450 monooxygenase peniB and the flavin-dependent monooxygenase peniC then catalyze a series of oxidation reactions to transform silphinene into penifulvin A. The chain is Silphinene synthase peniA from Penicillium patulum (Penicillium griseofulvum).